The sequence spans 94 residues: Beta-diguetoxin-Dc1a (94 aa).

A signal peptide spans 1–17; sequence MKVFVVLLCLSLAAVYA. Positions 18-38 are excised as a propeptide; the sequence is LEERLDKDADIMLDSPADMER. Cystine bridges form between cysteine 50-cysteine 63, cysteine 57-cysteine 77, cysteine 62-cysteine 91, and cysteine 79-cysteine 89.

This sequence belongs to the neurotoxin 26 (DTX) family. Expressed by the venom gland.

It localises to the secreted. Insecticidal toxin. This toxin promotes opening of insect Nav channels. The toxin binds to the S1-S2 and S3-S4 loops in the domain II voltage-sensor of insect Nav channels (i.e., receptor site 4). The American cockroach P.americana is largely resistant to the effects of this toxin due to an unusual sequence within the domain II S1-S2 loop. In vivo, paralyzes lepidopteran and dipteran larvae. Paralyzed insects ultimately die from secondary effects of starvation and dehydration. This Diguetia canities (Desert bush spider) protein is Beta-diguetoxin-Dc1a.